A 165-amino-acid polypeptide reads, in one-letter code: NADPH-dependent 7-cyano-7-deazaguanine reductase (165 aa).

Residue C56 is the Thioimide intermediate of the active site. D63 functions as the Proton donor in the catalytic mechanism. Substrate contacts are provided by residues 78–80 and 97–98; these read VES and HE.

It belongs to the GTP cyclohydrolase I family. QueF type 1 subfamily.

The protein localises to the cytoplasm. It carries out the reaction 7-aminomethyl-7-carbaguanine + 2 NADP(+) = 7-cyano-7-deazaguanine + 2 NADPH + 3 H(+). The protein operates within tRNA modification; tRNA-queuosine biosynthesis. Is totally inhibited by 4-aminobenzylcyanide in vitro. Catalyzes the NADPH-dependent reduction of 7-cyano-7-deazaguanine (preQ0) to 7-aminomethyl-7-deazaguanine (preQ1), a late step in the queuosine pathway. Is highly specific for its natural substrate preQ0, since it cannot use various aliphatic, aromatic and heterocyclic nitriles, although it can reduce the substrate analog 5-cyanopyrrolo[2,3-d]pyrimidin-4-one with lesser efficiency. In Geobacillus kaustophilus (strain HTA426), this protein is NADPH-dependent 7-cyano-7-deazaguanine reductase.